We begin with the raw amino-acid sequence, 201 residues long: Orotate phosphoribosyltransferase (201 aa).

5-phospho-alpha-D-ribose 1-diphosphate-binding positions include Lys-90 and 113 to 121 (EDIITTGGS). Orotate-binding residues include Thr-117 and Arg-145.

It belongs to the purine/pyrimidine phosphoribosyltransferase family. PyrE subfamily. As to quaternary structure, homodimer. Requires Mg(2+) as cofactor.

It carries out the reaction orotidine 5'-phosphate + diphosphate = orotate + 5-phospho-alpha-D-ribose 1-diphosphate. It functions in the pathway pyrimidine metabolism; UMP biosynthesis via de novo pathway; UMP from orotate: step 1/2. In terms of biological role, catalyzes the transfer of a ribosyl phosphate group from 5-phosphoribose 1-diphosphate to orotate, leading to the formation of orotidine monophosphate (OMP). This chain is Orotate phosphoribosyltransferase, found in Sulfurovum sp. (strain NBC37-1).